A 293-amino-acid polypeptide reads, in one-letter code: Ribosomal RNA small subunit methyltransferase A (293 aa).

6 residues coordinate S-adenosyl-L-methionine: asparagine 38, valine 40, glycine 65, glutamate 86, aspartate 116, and asparagine 133.

This sequence belongs to the class I-like SAM-binding methyltransferase superfamily. rRNA adenine N(6)-methyltransferase family. RsmA subfamily.

Its subcellular location is the cytoplasm. It carries out the reaction adenosine(1518)/adenosine(1519) in 16S rRNA + 4 S-adenosyl-L-methionine = N(6)-dimethyladenosine(1518)/N(6)-dimethyladenosine(1519) in 16S rRNA + 4 S-adenosyl-L-homocysteine + 4 H(+). Functionally, specifically dimethylates two adjacent adenosines (A1518 and A1519) in the loop of a conserved hairpin near the 3'-end of 16S rRNA in the 30S particle. May play a critical role in biogenesis of 30S subunits. The chain is Ribosomal RNA small subunit methyltransferase A from Paenarthrobacter aurescens (strain TC1).